The primary structure comprises 86 residues: Small ribosomal subunit protein bS20 (86 aa).

This sequence belongs to the bacterial ribosomal protein bS20 family.

Its function is as follows. Binds directly to 16S ribosomal RNA. The polypeptide is Small ribosomal subunit protein bS20 (Paenarthrobacter aurescens (strain TC1)).